Consider the following 148-residue polypeptide: Large ribosomal subunit protein bL9 (148 aa).

It belongs to the bacterial ribosomal protein bL9 family.

In terms of biological role, binds to the 23S rRNA. This Ruminiclostridium cellulolyticum (strain ATCC 35319 / DSM 5812 / JCM 6584 / H10) (Clostridium cellulolyticum) protein is Large ribosomal subunit protein bL9.